The chain runs to 402 residues: LIM/homeobox protein Lhx5 (402 aa).

LIM zinc-binding domains are found at residues A3–G61 and T62–L125. Disordered regions lie at residues V133–I187, N291–P335, and S365–Q392. Positions D151–A167 are enriched in basic and acidic residues. A DNA-binding region (homeobox) is located at residues R180 to K239. Over residues P300–G319 the composition is skewed to polar residues.

In terms of assembly, interacts with ldb1 and with the N-terminus of rnf12.

Its subcellular location is the nucleus. Probably involved in the patterning of the nervous system, in particular in the early specification of the diencephalon. This chain is LIM/homeobox protein Lhx5 (lhx5), found in Xenopus laevis (African clawed frog).